The following is a 463-amino-acid chain: Rubisco accumulation factor 1, chloroplastic (463 aa).

The span at 1-18 (MLSLSHPHPHPAASTTAP) shows a compositional bias: low complexity. The transit peptide at 1-31 (MLSLSHPHPHPAASTTAPRHQRTAPVWHRRR) directs the protein to the chloroplast. The tract at residues 1 to 84 (MLSLSHPHPH…PFHPPPSPLP (84 aa)) is disordered. Over residues 19 to 33 (RHQRTAPVWHRRRAS) the composition is skewed to basic residues. Residues 43–53 (PGGGSTGGRGG) show a composition bias toward gly residues. The segment at 83–275 (LPPSLRNLDL…SGRARVELEL (193 aa)) is N-terminal alpha-helix. Residues 240 to 294 (RQSREAIDVQDRVAELERALQVVETESGRARVELELERARRKAAGEEEVDEEGEE) are a coiled coil. The tract at residues 305 to 450 (VTVVRLRYGE…AEVVIVVRPP (146 aa)) is C-terminal beta sheet.

The protein belongs to the RAF family. In terms of assembly, homotrimer. As to expression, expressed in bundle sheath.

Its subcellular location is the plastid. It localises to the chloroplast. In terms of biological role, required for assembly or stability of RuBisCO. Acts at a postchaperonin step to fold and/or assemble the large subunit (LS) into RuBisCO. This chain is Rubisco accumulation factor 1, chloroplastic, found in Zea mays (Maize).